We begin with the raw amino-acid sequence, 496 residues long: Signal recognition particle subunit SRP54 1 (496 aa).

A G-domain region spans residues 1–296 (MVLAQLGGSI…DVKPFVSRLL (296 aa)). GTP-binding positions include 108 to 115 (GLQGSGKT), 191 to 195 (DTSGR), and 249 to 252 (TKMD). The tract at residues 297-496 (GMGDLSGLVN…MGMFGGGGGE (200 aa)) is M-domain.

This sequence belongs to the GTP-binding SRP family. SRP54 subfamily. In terms of assembly, component of a signal recognition particle (SRP) complex that consists of a 7SL RNA molecule of 300 nucleotides and six protein subunits: SRP72, SRP68, SRP54, SRP19, SRP14 and SRP9.

The protein localises to the cytoplasm. It is found in the endoplasmic reticulum. It catalyses the reaction GTP + H2O = GDP + phosphate + H(+). Its function is as follows. Component of the signal recognition particle (SRP) complex, a ribonucleoprotein complex that mediates the cotranslational targeting of secretory and membrane proteins to the endoplasmic reticulum (ER). As part of the SRP complex, associates with the SRP receptor (SR) component SRPRA to target secretory proteins to the endoplasmic reticulum membrane. Binds to the signal sequence of presecretory proteins when they emerge from the ribosomes. Displays basal GTPase activity, and stimulates reciprocal GTPase activation of the SR subunit SRPRA. Forms a guanosine 5'-triphosphate (GTP)-dependent complex with the SR subunit SRPRA. SR compaction and GTPase mediated rearrangement of SR drive SRP-mediated cotranslational protein translocation into the ER. Requires the presence of SRP9/SRP14 and/or SRP19 to stably interact with RNA. This chain is Signal recognition particle subunit SRP54 1, found in Solanum lycopersicum (Tomato).